Consider the following 111-residue polypeptide: uncharacterized protein (111 aa).

The next 2 helical transmembrane spans lie at 7-27 (ILNI…SMMI) and 53-73 (AFAM…TFLH).

Its subcellular location is the cell membrane. This is an uncharacterized protein from Bacillus anthracis.